The primary structure comprises 609 residues: Protein alan shepard (609 aa).

Positions 1-12 (MHPRYSPAPPPL) are enriched in pro residues. The segment at 1 to 96 (MHPRYSPAPP…ASVAAAPPTP (96 aa)) is disordered. Residue Tyr-5 is modified to Phosphotyrosine. The segment covering 13–35 (HQQQQQQPPQQQQQQMGGPHQQQ) has biased composition (low complexity). Gly residues predominate over residues 37 to 50 (GGVGPGTGHGGVGA). 2 stretches are compositionally biased toward low complexity: residues 51–68 (AVGA…NSQQ) and 83–92 (SSSAASVAAA). Phosphotyrosine occurs at positions 152 and 168. The tract at residues 190–252 (PATTTYGQRV…AQNQNQQGGE (63 aa)) is disordered. A compositionally biased stretch (low complexity) spans 204–252 (SPSNTNSSSSSNTGSQSGTLSTSLSNTTNTNTTMGPNGTAQNQNQQGGE). 2 RRM domains span residues 257-330 (TNLY…MAKQ) and 336-415 (TNLY…FADG). The disordered stretch occupies residues 583 to 609 (MTDSEQASTAASPDEAYTQYPHQAAPK).

Has a role in the perception of gravity. The protein is Protein alan shepard of Drosophila grimshawi (Hawaiian fruit fly).